Consider the following 507-residue polypeptide: Alkyl hydroperoxide reductase subunit F (507 aa).

Residue 207–222 (DVLIVGGGPASGSAAI) participates in FAD binding. An intrachain disulfide couples cysteine 335 to cysteine 338. 347-361 (DVAVIGGGNSGVEAA) is a binding site for NAD(+). 467 to 477 (TNVPGIFAAGD) contacts FAD.

The protein belongs to the class-II pyridine nucleotide-disulfide oxidoreductase family. Homodimer. FAD is required as a cofactor.

Its function is as follows. Serves to protect the cell against DNA damage by alkyl hydroperoxides. It can use either NADH or NADPH as electron donor for direct reduction of redox dyes or of alkyl hydroperoxides when combined with the AhpC protein. This is Alkyl hydroperoxide reductase subunit F (ahpF) from Staphylococcus aureus (strain MSSA476).